Here is a 359-residue protein sequence, read N- to C-terminus: Alkanal monooxygenase alpha chain (359 aa).

This sequence belongs to the bacterial luciferase oxidoreductase family. In terms of assembly, heterodimer of an alpha and a beta chain.

It carries out the reaction a long-chain fatty aldehyde + FMNH2 + O2 = a long-chain fatty acid + hnu + FMN + H2O + 2 H(+). Functionally, light-emitting reaction in luminous bacteria. The protein is Alkanal monooxygenase alpha chain (luxA) of Photorhabdus laumondii subsp. laumondii (strain DSM 15139 / CIP 105565 / TT01) (Photorhabdus luminescens subsp. laumondii).